The chain runs to 330 residues: tRNA U34 carboxymethyltransferase (330 aa).

Carboxy-S-adenosyl-L-methionine contacts are provided by residues K91, W105, K110, G130, 152 to 154 (DPS), 181 to 182 (IE), M196, Y200, and R315.

It belongs to the class I-like SAM-binding methyltransferase superfamily. CmoB family. Homotetramer.

The catalysed reaction is carboxy-S-adenosyl-L-methionine + 5-hydroxyuridine(34) in tRNA = 5-carboxymethoxyuridine(34) in tRNA + S-adenosyl-L-homocysteine + H(+). Functionally, catalyzes carboxymethyl transfer from carboxy-S-adenosyl-L-methionine (Cx-SAM) to 5-hydroxyuridine (ho5U) to form 5-carboxymethoxyuridine (cmo5U) at position 34 in tRNAs. In Shewanella woodyi (strain ATCC 51908 / MS32), this protein is tRNA U34 carboxymethyltransferase.